Consider the following 312-residue polypeptide: Homoserine O-acetyltransferase (312 aa).

The active-site Acyl-thioester intermediate is Cys-142. 2 residues coordinate substrate: Lys-163 and Ser-194. Residue His-237 is the Proton acceptor of the active site. Glu-239 is a catalytic residue. Arg-251 lines the substrate pocket.

It belongs to the MetA family.

The protein localises to the cytoplasm. It catalyses the reaction L-homoserine + acetyl-CoA = O-acetyl-L-homoserine + CoA. It participates in amino-acid biosynthesis; L-methionine biosynthesis via de novo pathway; O-acetyl-L-homoserine from L-homoserine: step 1/1. Transfers an acetyl group from acetyl-CoA to L-homoserine, forming acetyl-L-homoserine. In Catenibacterium mitsuokai (strain DSM 15897 / JCM 10609 / CCUG 48821 A / CIP 106738 / RCA14-39), this protein is Homoserine O-acetyltransferase.